Here is a 285-residue protein sequence, read N- to C-terminus: Probable endonuclease 4 (285 aa).

Residues His-69, His-109, Glu-145, Asp-179, His-182, His-216, Asp-229, His-231, and Glu-261 each contribute to the Zn(2+) site.

Belongs to the AP endonuclease 2 family. Requires Zn(2+) as cofactor.

The catalysed reaction is Endonucleolytic cleavage to 5'-phosphooligonucleotide end-products.. Endonuclease IV plays a role in DNA repair. It cleaves phosphodiester bonds at apurinic or apyrimidinic (AP) sites, generating a 3'-hydroxyl group and a 5'-terminal sugar phosphate. The polypeptide is Probable endonuclease 4 (Salmonella typhi).